Reading from the N-terminus, the 311-residue chain is Progestin and adipoQ receptor family member 3 (311 aa).

The segment at 1–20 (MHQKLLKSAHYIELGSYQYW) is required for interaction with SREBF2. The Cytoplasmic segment spans residues 1-70 (MHQKLLKSAH…KSLFILSNET (70 aa)). A required for interaction with SCAP region spans residues 41 to 60 (KDNPYITDGYRAYLPSRLCI). A golgi targeting region spans residues 61–71 (KSLFILSNETV). A helical membrane pass occupies residues 71–91 (VNIWSHLLGFFLFFTLGIYDM). Topologically, residues 92–104 (TSVLPSASASRED) are lumenal. The chain crosses the membrane as a helical span at residues 105 to 125 (FVICSICLFCFQVCMLCSVGY). The Cytoplasmic segment spans residues 126–145 (HLFSCHRSEKTCRRWMALDY). Residues 146 to 166 (AGISIGILGCYVSGVFYAFYC) form a helical membrane-spanning segment. The Lumenal segment spans residues 167–172 (NNYWRQ). A helical membrane pass occupies residues 173-193 (VYLITVLAMILAVFFAQIHPS). Over 194-203 (YLTQQWQRLR) the chain is Cytoplasmic. The helical transmembrane segment at 204 to 224 (PIIFCSVSGYGVIPTLHWVWL) threads the bilayer. The Lumenal portion of the chain corresponds to 225–235 (NGGVSAPIVQD). The chain crosses the membrane as a helical span at residues 236 to 256 (FAPRVIVMYVIALLAFLFYIS). Over 257–275 (KVPERYFPGQLNYLGSSHQ) the chain is Cytoplasmic. Residues 276 to 296 (IWHVLAVVMLYWWHQSTVYVM) traverse the membrane as a helical segment. Residues 297 to 311 (QYRHSKPCPDYVSHL) lie on the Lumenal side of the membrane. The tract at residues 299-303 (RHSKP) is golgi targeting.

The protein belongs to the ADIPOR family. Interacts with SCAP and SREBF2; the interactions are direct, increase in low cholesterol conditions and tether SCAP:SREBP complex to the Golgi apparatus. Interaction with SCAP is mutually exclusive with INSIG1. In hepatocytes, interacts with PPARA and HUWE1; the interactions promote PPARA poylubiquitination and HUWE1-mediated degradation. In macrophages, interacts with PPARG and STUB1; the interactions promote PPARG poylubiquitination and STUB1-mediated degradation.

The protein localises to the golgi apparatus membrane. Golgi-anchored protein which modulates its interactors acitivies by tethering them to the Golgi apparatus. Functions as a spatial regulator of RAF1 kinase by sequestrating it to the Golgi apparatus. Acts as a positive regulator of cholesterol biosynthesis by mediating the anchoring of the SCAP:SREBP complex in the Golgi apparatus, thereby promoting SCAP:SREBF2 complex formation, potentiating SREBF2 and SREBF1 processing and enhancing lipid synthesis. Also regulates PPARA and PPARG functions by mediating their interaction with E3 ubiquitin ligases, such as STUB1 or HUWE1, leading to their polyubiquitination and proteasome-mediated degradation. This is Progestin and adipoQ receptor family member 3 from Mus musculus (Mouse).